Consider the following 63-residue polypeptide: Large ribosomal subunit protein uL29 (63 aa).

This sequence belongs to the universal ribosomal protein uL29 family.

The polypeptide is Large ribosomal subunit protein uL29 (Bordetella avium (strain 197N)).